Reading from the N-terminus, the 458-residue chain is Chromosomal replication initiator protein DnaA (458 aa).

Positions 1–79 (MSLAIWQECL…ENPNHSVKIR (79 aa)) are domain I, interacts with DnaA modulators. Residues 79–120 (RLMVGNVSSVEKKPAKQIPTQAPLTNQPWEGESKAHRVPHKS) form a domain II region. Positions 92–114 (PAKQIPTQAPLTNQPWEGESKAH) are disordered. A compositionally biased stretch (polar residues) spans 96–106 (IPTQAPLTNQP). The domain III, AAA+ region stretch occupies residues 121–338 (NLIKKYTFDN…GAIANISAKA (218 aa)). Residues G165, G167, K168, and T169 each coordinate ATP. The tract at residues 339-458 (QFTGQGITIS…YKILIRTLSM (120 aa)) is domain IV, binds dsDNA.

The protein belongs to the DnaA family. As to quaternary structure, oligomerizes as a right-handed, spiral filament on DNA at oriC.

The protein resides in the cytoplasm. In terms of biological role, plays an essential role in the initiation and regulation of chromosomal replication. ATP-DnaA binds to the origin of replication (oriC) to initiate formation of the DNA replication initiation complex once per cell cycle. Binds the DnaA box (a 9 base pair repeat at the origin) and separates the double-stranded (ds)DNA. Forms a right-handed helical filament on oriC DNA; dsDNA binds to the exterior of the filament while single-stranded (ss)DNA is stabiized in the filament's interior. The ATP-DnaA-oriC complex binds and stabilizes one strand of the AT-rich DNA unwinding element (DUE), permitting loading of DNA polymerase. After initiation quickly degrades to an ADP-DnaA complex that is not apt for DNA replication. Binds acidic phospholipids. In Psychromonas ingrahamii (strain DSM 17664 / CCUG 51855 / 37), this protein is Chromosomal replication initiator protein DnaA.